A 499-amino-acid chain; its full sequence is L-arabinose isomerase (499 aa).

Mn(2+)-binding residues include E306, E333, H350, and H449.

The protein belongs to the arabinose isomerase family. It depends on Mn(2+) as a cofactor.

The enzyme catalyses beta-L-arabinopyranose = L-ribulose. It participates in carbohydrate degradation; L-arabinose degradation via L-ribulose; D-xylulose 5-phosphate from L-arabinose (bacterial route): step 1/3. Catalyzes the conversion of L-arabinose to L-ribulose. The sequence is that of L-arabinose isomerase from Aeromonas hydrophila subsp. hydrophila (strain ATCC 7966 / DSM 30187 / BCRC 13018 / CCUG 14551 / JCM 1027 / KCTC 2358 / NCIMB 9240 / NCTC 8049).